The sequence spans 333 residues: Dihydroorotate dehydrogenase (quinone) (333 aa).

Residues 56–60 (AGLDK) and Thr80 each bind FMN. Lys60 contacts substrate. 105-109 (NRMGF) lines the substrate pocket. Residues Asn133 and Asn166 each coordinate FMN. Asn166 serves as a coordination point for substrate. Ser169 serves as the catalytic Nucleophile. Substrate is bound at residue Asn171. 2 residues coordinate FMN: Lys211 and Thr239. 240–241 (NT) lines the substrate pocket. FMN is bound by residues Gly262, Gly291, and 312-313 (YS).

This sequence belongs to the dihydroorotate dehydrogenase family. Type 2 subfamily. In terms of assembly, monomer. FMN serves as cofactor.

The protein localises to the cell membrane. The catalysed reaction is (S)-dihydroorotate + a quinone = orotate + a quinol. The protein operates within pyrimidine metabolism; UMP biosynthesis via de novo pathway; orotate from (S)-dihydroorotate (quinone route): step 1/1. Catalyzes the conversion of dihydroorotate to orotate with quinone as electron acceptor. The polypeptide is Dihydroorotate dehydrogenase (quinone) (Legionella pneumophila (strain Corby)).